A 168-amino-acid chain; its full sequence is S-ribosylhomocysteine lyase (168 aa).

Fe cation is bound by residues H54, H58, and C128.

It belongs to the LuxS family. As to quaternary structure, homodimer. Fe cation serves as cofactor.

The enzyme catalyses S-(5-deoxy-D-ribos-5-yl)-L-homocysteine = (S)-4,5-dihydroxypentane-2,3-dione + L-homocysteine. In terms of biological role, involved in the synthesis of autoinducer 2 (AI-2) which is secreted by bacteria and is used to communicate both the cell density and the metabolic potential of the environment. The regulation of gene expression in response to changes in cell density is called quorum sensing. Catalyzes the transformation of S-ribosylhomocysteine (RHC) to homocysteine (HC) and 4,5-dihydroxy-2,3-pentadione (DPD). This chain is S-ribosylhomocysteine lyase, found in Mannheimia succiniciproducens (strain KCTC 0769BP / MBEL55E).